The primary structure comprises 277 residues: Large ribosomal subunit protein uL2c (277 aa).

The segment at 224–257 (VMNPIDHPHGGGEGRAPIGRKKPLTPWGHPALGR) is disordered.

It belongs to the universal ribosomal protein uL2 family. In terms of assembly, part of the 50S ribosomal subunit.

The protein localises to the plastid. The protein resides in the chloroplast. In Anthoceros angustus (Hornwort), this protein is Large ribosomal subunit protein uL2c (rpl2).